Consider the following 254-residue polypeptide: rRNA-processing protein UTP23 (254 aa).

The tract at residues N172–Q254 is disordered. 2 stretches are compositionally biased toward basic and acidic residues: residues N175–T192 and D218–K228. Position 182 is a phosphoserine (S182). Over residues E229–S240 the composition is skewed to basic residues. Residues N241 to Q254 show a composition bias toward polar residues.

This sequence belongs to the UTP23/FCF1 family. UTP23 subfamily.

Its subcellular location is the mitochondrion. The protein localises to the nucleus. The protein resides in the nucleolus. In terms of biological role, involved in rRNA-processing and ribosome biogenesis. This chain is rRNA-processing protein UTP23 (UTP23), found in Saccharomyces cerevisiae (strain ATCC 204508 / S288c) (Baker's yeast).